The following is a 202-amino-acid chain: Imidazoleglycerol-phosphate dehydratase (202 aa).

It belongs to the imidazoleglycerol-phosphate dehydratase family.

It is found in the cytoplasm. It carries out the reaction D-erythro-1-(imidazol-4-yl)glycerol 3-phosphate = 3-(imidazol-4-yl)-2-oxopropyl phosphate + H2O. It participates in amino-acid biosynthesis; L-histidine biosynthesis; L-histidine from 5-phospho-alpha-D-ribose 1-diphosphate: step 6/9. This is Imidazoleglycerol-phosphate dehydratase from Sinorhizobium fredii (strain NBRC 101917 / NGR234).